We begin with the raw amino-acid sequence, 552 residues long: MIAFLRLLKILRVFARYRLDQLLPANLPLAATLLLLPFKLFPQPRLSRGERLRRACEDLGPIFVKFGQLLSTRPDLVPADIVLELNHLQDNVTPFSKGEFQRIVESSLGASVAEVFASFNIEPLASASVAQVHTAVLKDGREVVIKVIRPGIDKVIAQDIALLLRVARWVENNTLDGKRLHPVEIVEDYRTTIFDELDLQREAANGSQLRRNFLNSPLLYVPEVYWEYTRTNVLVMERIYGIPVTDLAALNAQQTDMKKLAERGVEIFFTQVFEHNFFHADMHPGNIFVAHEHPSAPQYIAVDMAIVGSLTRADQYYLARNLLAMFRRDYRQVAELHVESGWVPSHVRVEELEAAVRTVCEPIFEKPLKEISFAQVLLNLFRTARRFEMEVQPQLVLLQKTLLNIEGLGRQLYPDLDLWATAHPFLERWLKNRFHPKSLWRELKRYAPEWMEKFPQVPNLVFNGLQQLQNLGELAPRLEEATHAYKAQQQLARQRNRRRVITLLAFAGAIALAWPSLGEGIRHWANHFSFGDIPTASYLLAAIGLSAWLLKR.

Residues 22 to 42 (LLPANLPLAATLLLLPFKLFP) form a helical membrane-spanning segment. Positions 118-498 (SFNIEPLASA…QQLARQRNRR (381 aa)) constitute a Protein kinase domain. ATP-binding positions include 124-132 (LASASVAQV) and lysine 146. Aspartate 281 serves as the catalytic Proton acceptor. A run of 2 helical transmembrane segments spans residues 501-521 (ITLL…GEGI) and 530-550 (FGDI…AWLL).

Belongs to the ABC1 family. UbiB subfamily.

Its subcellular location is the cell inner membrane. It functions in the pathway cofactor biosynthesis; ubiquinone biosynthesis [regulation]. Is probably a protein kinase regulator of UbiI activity which is involved in aerobic coenzyme Q (ubiquinone) biosynthesis. In Cellvibrio japonicus (strain Ueda107) (Pseudomonas fluorescens subsp. cellulosa), this protein is Probable protein kinase UbiB.